The primary structure comprises 240 residues: Phosphoribosylaminoimidazole-succinocarboxamide synthase (240 aa).

It belongs to the SAICAR synthetase family.

It carries out the reaction 5-amino-1-(5-phospho-D-ribosyl)imidazole-4-carboxylate + L-aspartate + ATP = (2S)-2-[5-amino-1-(5-phospho-beta-D-ribosyl)imidazole-4-carboxamido]succinate + ADP + phosphate + 2 H(+). The protein operates within purine metabolism; IMP biosynthesis via de novo pathway; 5-amino-1-(5-phospho-D-ribosyl)imidazole-4-carboxamide from 5-amino-1-(5-phospho-D-ribosyl)imidazole-4-carboxylate: step 1/2. In Limosilactobacillus fermentum (strain NBRC 3956 / LMG 18251) (Lactobacillus fermentum), this protein is Phosphoribosylaminoimidazole-succinocarboxamide synthase.